Here is a 365-residue protein sequence, read N- to C-terminus: Membrane cofactor protein (365 aa).

Positions 1 to 44 are cleaved as a signal peptide; the sequence is MTAAPLMPDSTHPCRRRKSYTFFWCSLGVYAEALLFLLSHLSDA. Sushi domains lie at 45–106, 107–170, 171–236, and 237–296; these read CELP…GCIK, VQCT…HCEK, IYCL…ECKV, and VKCP…KCLK. Residues 45–329 are Extracellular-facing; it reads CELPRPFEAM…GIFSQELDAW (285 aa). 6 cysteine pairs are disulfide-bonded: cysteine 109/cysteine 151, cysteine 137/cysteine 168, cysteine 173/cysteine 221, cysteine 202/cysteine 234, cysteine 239/cysteine 281, and cysteine 267/cysteine 294. N-linked (GlcNAc...) asparagine glycosylation occurs at asparagine 181. The O-linked (GalNAc...) threonine glycan is linked to threonine 205. Threonine 301 and threonine 304 each carry an O-linked (GalNAc...) threonine glycan. Asparagine 310 is a glycosylation site (N-linked (GlcNAc...) asparagine). O-linked (GalNAc...) threonine glycosylation is present at threonine 312. A helical membrane pass occupies residues 330–350; that stretch reads IIALIVITSIVGVFILCLIVL. Residues 351-365 are Cytoplasmic-facing; the sequence is RCFEHRKKTNVSAAR.

In terms of assembly, interacts with C3b. Interacts with C4b. Interacts with moesin/MSN. May be O-glycosylated. Post-translationally, N-glycosylated. In terms of tissue distribution, present only in testis (at protein level).

The protein localises to the cytoplasmic vesicle. It localises to the secretory vesicle. It is found in the acrosome inner membrane. Its subcellular location is the secreted. Functionally, may be involved in the fusion of the spermatozoa with the oocyte during fertilization. This Mus musculus (Mouse) protein is Membrane cofactor protein (Cd46).